We begin with the raw amino-acid sequence, 340 residues long: MEF2 transcription factor homolog (340 aa).

Positions 1-61 (MGRKKIQITR…NKLFQYASTD (61 aa)) constitute an MADS-box domain. Disordered stretches follow at residues 90 to 112 (RKEG…TSPV), 193 to 217 (NQRN…LDFP), 258 to 283 (LQQR…NGTS), and 312 to 340 (PNTY…QQLT). Positions 200-211 (SSTSVAPSSSSS) are enriched in low complexity. Polar residues predominate over residues 258-268 (LQQRPVSQPAP). The span at 269 to 283 (SISNSSTNGISNGTS) shows a compositional bias: low complexity. Residues 318–332 (MEPHSPPEKRPRITT) are compositionally biased toward basic and acidic residues.

It belongs to the MEF2 family. Interacts with histone deacetylase hda-4 isoform b.

Its subcellular location is the nucleus. In terms of biological role, transcription regulator. Binds specifically to the MEF2 element, 5'-[TC]TA[AT][AT][AT][AT]TA[AG]-3' in the regulatory elements of target genes, such as chemoreceptors str-1 and srh-234. Involved in transduction of sensory signals, together with egl-4, kin-29 and hda-4; binding to histone deacetylase hda-4 enables negative modulation of chemoreceptor gene expression in chemosensory neurons. In response to starvation, negatively modulates expression of chemoreceptor srh-234 in ADL sensory neurons, acting in concert with basic helix-loop-helix (bHLH) transcription factors. Plays a role in regulating muscle sensitivity to acetylcholine (ACh) and the magnitude of presynaptic ACh release via a retrograde signal, perhaps by indirectly decreasing Ras-related protein Rab-3 activity. The sequence is that of MEF2 transcription factor homolog from Caenorhabditis elegans.